Reading from the N-terminus, the 332-residue chain is L-lactate dehydrogenase C chain (332 aa).

S2 carries the post-translational modification Blocked amino end (Ser). Residues 29–57 (GNVG…DTNK) and R99 contribute to the NAD(+) site. Substrate contacts are provided by R106, N138, and R169. N138 provides a ligand contact to NAD(+). The active-site Proton acceptor is H193. T248 is a binding site for substrate.

It belongs to the LDH/MDH superfamily. LDH family. Homotetramer. Interacts with RABL2/RABL2A; binds preferentially to GTP-bound RABL2. As to expression, expressed within the midpiece of sperm tail (at protein level).

It is found in the cytoplasm. The catalysed reaction is (S)-lactate + NAD(+) = pyruvate + NADH + H(+). Its pathway is fermentation; pyruvate fermentation to lactate; (S)-lactate from pyruvate: step 1/1. Possible role in sperm motility. This Mus musculus (Mouse) protein is L-lactate dehydrogenase C chain (Ldhc).